The following is a 536-amino-acid chain: Methyl-accepting chemotaxis aspartate transducer (536 aa).

Topologically, residues 1–10 (MFNRIRISTS) are cytoplasmic. Residues 11-31 (LFLLLISFCIMQLISTGLSYV) traverse the membrane as a helical segment. The Periplasmic segment spans residues 32-188 (ALRADNHNLE…ASSQQAYGWS (157 aa)). The interval 64–73 (RNTLNRAGTR) is the 3 Arg may form a positively charged pocket, which binds the alpha-carboxyl group of the attractant AA. The helical transmembrane segment at 189–209 (IWLVAGAVLMLLVVTLSAMWW) threads the bilayer. Topologically, residues 210-536 (LRTMLVQPLN…VKETLDCQTA (327 aa)) are cytoplasmic. The 53-residue stretch at 212 to 264 (TMLVQPLNIIRGHFERIASGDLSAPIEVYGRNEISQLFASLQRMQQSLIGTVG) folds into the HAMP domain. The Methyl-accepting transducer domain occupies 269 to 498 (GAESILIGLQ…ESASAAAALE (230 aa)). A Glutamate methyl ester (Gln) modification is found at glutamine 293. Glutamate 300 carries the post-translational modification Glutamate methyl ester (Glu). Glutamine 307 carries the post-translational modification Glutamate methyl ester (Gln). Glutamate methyl ester (Glu) is present on residues glutamate 489 and glutamate 498.

Belongs to the methyl-accepting chemotaxis (MCP) protein family.

It is found in the cell inner membrane. This protein responds to changes in Asp concentration in the environment, transduces a signal from the outside to the inside of the cell, and facilitates sensory adaptation through various levels of methylation. Functionally, chemotactic-signal transducers respond to changes in the concentration of attractants and repellents in the environment, transduce a signal from the outside to the inside of the cell, and facilitate sensory adaptation through the variation of the level of methylation. Attractants increase the level of methylation while repellents decrease the level of methylation, the methyl groups are added by the methyltransferase CheR and removed by the methylesterase CheB. This is Methyl-accepting chemotaxis aspartate transducer (tas) from Klebsiella aerogenes (strain ATCC 13048 / DSM 30053 / CCUG 1429 / JCM 1235 / KCTC 2190 / NBRC 13534 / NCIMB 10102 / NCTC 10006 / CDC 819-56) (Enterobacter aerogenes).